The chain runs to 792 residues: 5-methyltetrahydropteroyltriglutamate--homocysteine methyltransferase (792 aa).

Residues 16 to 19 and lysine 112 contribute to the 5-methyltetrahydropteroyltri-L-glutamate site; that span reads RELK. Residues 432–434 and glutamate 485 each bind L-homocysteine; that span reads IGS. Residues 432 to 434 and glutamate 485 contribute to the L-methionine site; that span reads IGS. Residues 516–517 and tryptophan 562 each bind 5-methyltetrahydropteroyltri-L-glutamate; that span reads RC. Aspartate 600 provides a ligand contact to L-homocysteine. Residue aspartate 600 coordinates L-methionine. Glutamate 606 contacts 5-methyltetrahydropteroyltri-L-glutamate. Histidine 642, cysteine 644, and glutamate 666 together coordinate Zn(2+). Catalysis depends on histidine 695, which acts as the Proton donor. A Zn(2+)-binding site is contributed by cysteine 727.

The protein belongs to the vitamin-B12 independent methionine synthase family. It depends on Zn(2+) as a cofactor.

The enzyme catalyses 5-methyltetrahydropteroyltri-L-glutamate + L-homocysteine = tetrahydropteroyltri-L-glutamate + L-methionine. The protein operates within amino-acid biosynthesis; L-methionine biosynthesis via de novo pathway; L-methionine from L-homocysteine (MetE route): step 1/1. Functionally, catalyzes the transfer of a methyl group from 5-methyltetrahydrofolate to homocysteine resulting in methionine formation. This chain is 5-methyltetrahydropteroyltriglutamate--homocysteine methyltransferase, found in Cupriavidus necator (Alcaligenes eutrophus).